Here is a 68-residue protein sequence, read N- to C-terminus: Conotoxin Cal14.13c (68 aa).

An N-terminal signal peptide occupies residues 1–20 (MKLCVVXVLLMLAMPFNGGE). Residues 21-68 (ASRFFNQHARSQRSGMKTRGIWCDPPCPEGETCRGGECSDEFNGDLGG) constitute a propeptide that is removed on maturation. Position 66 is a leucine amide (leucine 66).

Post-translationally, contains 2 disulfide bonds. As to expression, expressed by the venom duct.

It is found in the secreted. Functionally, probable neurotoxin with unknown target. Possibly targets ion channels. The chain is Conotoxin Cal14.13c from Californiconus californicus (California cone).